A 450-amino-acid chain; its full sequence is LanC-like protein 2 (450 aa).

Glycine 2 is lipidated: N-myristoyl glycine. The tract at residues 2–15 is interaction with inositol phospholipids; that stretch reads GETMSKRLKLHLGG. Tyrosine 198 is subject to Phosphotyrosine.

Belongs to the LanC-like protein family. In terms of assembly, interacts with an array of inositol phospholipids such as phosphatidylinositol 3-phosphate (PI3P), phosphatidylinositol 4-phosphate (PI4P) and phosphatidylinositol 5-phosphate (PI5P). PIP-binding enhances membrane association. Post-translationally, myristoylated. Essential for membrane association. Expressed in brain and testis.

It is found in the nucleus. The protein resides in the cytoplasm. Its subcellular location is the cell membrane. In terms of biological role, necessary for abscisic acid (ABA) binding on the cell membrane and activation of the ABA signaling pathway in granulocytes. This chain is LanC-like protein 2 (LANCL2), found in Homo sapiens (Human).